A 503-amino-acid chain; its full sequence is Surface lipoprotein assembly modifier (503 aa).

An N-terminal signal peptide occupies residues 1-34 (MTITPVYTTFTPTKTPIKFFMAGLTFLIAHISHA). An N-terminal domain region spans residues 38 to 220 (RTDNQEPINQ…QYRQALKQRD (183 aa)). One copy of the TPR repeat lies at 136 to 169 (ILLGYANALAALDKGNAKKAIDELRRIIAIMPEY). The interval 221–503 (SWTWQVGMNL…QMFVEFSRIF (283 aa)) is C-terminal probable beta barrel. 14 beta stranded membrane passes run 222–232 (WTWQVGMNLAK), 259–270 (LSYQLGADKKWS), 275–285 (AYVGANAQIYG), 299–308 (GRLGANLGFA), 313–322 (DLSIETYGEK), 334–343 (IGIRMSVDYR), 348–358 (FQSLNAIDISR), 372–382 (TLYSTSLIYYP), 387–396 (YYLLGADFYD), 410–419 (RGIRTAWGQE), 424–434 (LSSRAQISINK), 454–463 (MQASLSLWHR), 470–479 (ITPRLTISTN), and 493–503 (NQMFVEFSRIF).

Belongs to the Slam family.

Its subcellular location is the cell outer membrane. Its function is as follows. Required for correct export to the cell surface of some cell outer membrane lipoproteins (tested with TpbP) upon heterologous expression in E.coli and probably also in Moraxella. The chain is Surface lipoprotein assembly modifier from Moraxella catarrhalis (Branhamella catarrhalis).